Here is a 320-residue protein sequence, read N- to C-terminus: Olfactory receptor 2AT4 (320 aa).

Topologically, residues 1-31 are extracellular; that stretch reads MDATACNESVDGSPVFYLLGIPSLPETFFLP. An N-linked (GlcNAc...) asparagine glycan is attached at Asn-7. A helical transmembrane segment spans residues 32–52; sequence VFFIFLLFYLLILMGNALILV. Residues 53–62 are Cytoplasmic-facing; the sequence is AVVAEPSLHK. A helical transmembrane segment spans residues 63–83; that stretch reads PMYFFLINLSTLDILFTTTTV. Residues 84-102 are Extracellular-facing; sequence PKMLSLFLLGDRFLSFSSC. Cys-102 and Cys-184 are joined by a disulfide. Residues 103–123 traverse the membrane as a helical segment; sequence LLQMYLFQSFTCSEAFILVVM. Residues 124 to 145 are Cytoplasmic-facing; sequence AYDRYVAICHPLHYPVLMNPQT. A helical membrane pass occupies residues 146–166; it reads NATLAASAWLTALLLPIPAVV. The Extracellular segment spans residues 167-200; the sequence is RTSQMAYNSIAYIYHCFCDHLAVVQASCSDTTPQ. The chain crosses the membrane as a helical span at residues 201-221; the sequence is TLMGFCIAMVVSFLPLLLVLL. The Cytoplasmic segment spans residues 222–245; sequence SYVHILASVLRISSLEGRAKAFST. Residues 246–266 form a helical membrane-spanning segment; the sequence is CSSHLLVVGTYYSSIAIAYVA. Topologically, residues 267 to 276 are extracellular; it reads YRADLPLDFH. The helical transmembrane segment at 277–297 threads the bilayer; it reads IMGNVVYAILTPILNPLIYTL. Over 298 to 320 the chain is Cytoplasmic; that stretch reads RNRDVKAAITKIMSQDPGCDRSI.

The protein belongs to the G-protein coupled receptor 1 family. Detected in the keratinocytes of the epidermis (at protein level). Detected in hair follicles in proximal outer root sheath and hair matrix keratinocytes (at protein level).

It is found in the cell membrane. In terms of biological role, olfactory receptor. Activated by the synthetic sandalwood odorant sandalore. Endogenous ligand is unknown. The activity of this receptor is probably mediated by G proteins which induce elevation of intracellular Ca(2+), a cAMP-dependent pathway and phosphorylation of MAPK1/ERK2, MAPK3/ERK1 and p38 MAPKs. Activation of OR2AT4 induces proliferation, migration, and re-epithelialization during wound-healing processes of keratinocytes. Stimulation of OR2AT4 by sandalore promotes hair growth by decreasing apoptosis and increasing production of the anagen-prolonging growth factor IGF1 as well as other pathways involving various kinases. This is Olfactory receptor 2AT4 from Homo sapiens (Human).